The chain runs to 501 residues: Phosphoethanolamine N-methyltransferase 1 (501 aa).

S-adenosyl-L-homocysteine-binding residues include Gly72, Arg77, Asp93, Asp118, Val119, and Asn137. 5 residues coordinate phosphocholine: Ser170, Thr175, Gly176, Arg180, and Tyr187. Residues 256-257 (QY) and Tyr265 contribute to the N-methylethanolamine phosphate site. Tyr265 provides a ligand contact to phosphocholine. S-adenosyl-L-homocysteine contacts are provided by Val274, Ser275, Gly301, Asp323, Asp349, Cys350, and Arg366. Phosphocholine-binding residues include Tyr397, Tyr411, Arg415, Tyr417, and Lys483. N-methylethanolamine phosphate-binding positions include Tyr397, Tyr411, 415–417 (RGY), and Lys483.

Belongs to the class I-like SAM-binding methyltransferase superfamily. PEAMT family.

It carries out the reaction phosphoethanolamine + S-adenosyl-L-methionine = N-methylethanolamine phosphate + S-adenosyl-L-homocysteine + H(+). It catalyses the reaction N-methylethanolamine phosphate + S-adenosyl-L-methionine = N,N-dimethylethanolamine phosphate + S-adenosyl-L-homocysteine + H(+). The catalysed reaction is N,N-dimethylethanolamine phosphate + S-adenosyl-L-methionine = phosphocholine + S-adenosyl-L-homocysteine + H(+). It participates in phospholipid metabolism; phosphatidylcholine biosynthesis; phosphocholine from phosphoethanolamine: step 1/1. Functionally, involved in phosphocholine biosynthesis. Catalyzes the N-methylation of phosphoethanolamine, phosphomonomethylethanolamine and phosphodimethylethanolamine, the three methylation steps required to convert phosphoethanolamine to phosphocholine (PC). May be involved in root development. The sequence is that of Phosphoethanolamine N-methyltransferase 1 from Zea mays (Maize).